Consider the following 1097-residue polypeptide: Protease Do-like 7 (1097 aa).

The segment at 55–243 is serine protease; the sequence is VLRTTACRAF…LPLQRVVRAL (189 aa). The PDZ domain maps to 269–366; it reads MTFLHKGFDE…RGGQPLSVSV (98 aa). His524 serves as the catalytic Charge relay system. Polar residues predominate over residues 546 to 556; the sequence is TSSGDGSQNDF. The tract at residues 546–577 is disordered; the sequence is TSSGDGSQNDFGSEAKKQRVDEDSSDGIAANG. Basic and acidic residues predominate over residues 558 to 567; that stretch reads SEAKKQRVDE. The active-site Charge relay system is the Ser785.

This sequence belongs to the peptidase S1C family.

The protein localises to the cytoplasm. Probable serine protease. This Arabidopsis thaliana (Mouse-ear cress) protein is Protease Do-like 7 (DEGP7).